Consider the following 270-residue polypeptide: Phospholysine phosphohistidine inorganic pyrophosphate phosphatase (270 aa).

The Mg(2+) site is built by Asp17 and Ser19. Residues 17 to 19, 54 to 55, and Lys189 contribute to the substrate site; these read DIS and TN. Mg(2+) is bound at residue Asp214.

The protein belongs to the HAD-like hydrolase superfamily. In terms of assembly, homodimer. Mg(2+) serves as cofactor. As to expression, expressed in brain, and at lower levels in liver and kidney. Detected in thyroid (at protein level). Expressed in liver, kidney and moderately in brain.

Its subcellular location is the cytoplasm. The protein localises to the nucleus. The enzyme catalyses diphosphate + H2O = 2 phosphate + H(+). Its function is as follows. Phosphatase that hydrolyzes imidodiphosphate, 3-phosphohistidine and 6-phospholysine. Has broad substrate specificity and can also hydrolyze inorganic diphosphate, but with lower efficiency. The chain is Phospholysine phosphohistidine inorganic pyrophosphate phosphatase (LHPP) from Homo sapiens (Human).